The following is a 151-amino-acid chain: Small ribosomal subunit protein uS15 (151 aa).

Residues 1 to 20 (MGRMHSNGKGISGSSLPYNR) form a disordered region.

The protein belongs to the universal ribosomal protein uS15 family. Component of the small ribosomal subunit. Part of the small subunit (SSU) processome, composed of more than 70 proteins and the RNA chaperone small nucleolar RNA (snoRNA) U3.

It is found in the cytoplasm. Its subcellular location is the nucleus. The protein localises to the nucleolus. Its function is as follows. Component of the small ribosomal subunit. The ribosome is a large ribonucleoprotein complex responsible for the synthesis of proteins in the cell. Part of the small subunit (SSU) processome, first precursor of the small eukaryotic ribosomal subunit. During the assembly of the SSU processome in the nucleolus, many ribosome biogenesis factors, an RNA chaperone and ribosomal proteins associate with the nascent pre-rRNA and work in concert to generate RNA folding, modifications, rearrangements and cleavage as well as targeted degradation of pre-ribosomal RNA by the RNA exosome. The protein is Small ribosomal subunit protein uS15 (rps13) of Dictyostelium discoideum (Social amoeba).